The following is a 61-amino-acid chain: Lens epithelial cell protein LEP503 (61 aa).

As to expression, restricted to lens epithelial cells.

Functionally, may play a role in lens epithelial cell differentiation. This Homo sapiens (Human) protein is Lens epithelial cell protein LEP503 (LENEP).